A 437-amino-acid polypeptide reads, in one-letter code: NADH-ubiquinone oxidoreductase chain 4 (437 aa).

The next 13 membrane-spanning stretches (helical) occupy residues 8–28 (GASI…AFII), 50–70 (LTPI…LVLI), 78–98 (YKYI…FCVC), 100–120 (FLTF…LILL), 132–152 (FYLM…LLYL), 177–197 (LVGL…HLWL), 212–232 (LAGV…NFII), 239–259 (VISV…IICI), 266–286 (ALVA…ILMM), 297–317 (TMIA…LSYL), 324–344 (LMFM…WFLF), 361–381 (LLII…MCII), and 417–437 (HVLT…LFSV).

Belongs to the complex I subunit 4 family.

Its subcellular location is the mitochondrion membrane. The enzyme catalyses a ubiquinone + NADH + 5 H(+)(in) = a ubiquinol + NAD(+) + 4 H(+)(out). Functionally, core subunit of the mitochondrial membrane respiratory chain NADH dehydrogenase (Complex I) that is believed to belong to the minimal assembly required for catalysis. Complex I functions in the transfer of electrons from NADH to the respiratory chain. The immediate electron acceptor for the enzyme is believed to be ubiquinone. The chain is NADH-ubiquinone oxidoreductase chain 4 (ND4) from Albinaria caerulea (Land snail).